Reading from the N-terminus, the 294-residue chain is Acetylglutamate kinase (294 aa).

Substrate is bound by residues 67-68 (GG), Arg-89, and Asn-193.

This sequence belongs to the acetylglutamate kinase family. ArgB subfamily.

The protein resides in the cytoplasm. It catalyses the reaction N-acetyl-L-glutamate + ATP = N-acetyl-L-glutamyl 5-phosphate + ADP. The protein operates within amino-acid biosynthesis; L-arginine biosynthesis; N(2)-acetyl-L-ornithine from L-glutamate: step 2/4. Catalyzes the ATP-dependent phosphorylation of N-acetyl-L-glutamate. This Leptospira interrogans serogroup Icterohaemorrhagiae serovar copenhageni (strain Fiocruz L1-130) protein is Acetylglutamate kinase.